A 301-amino-acid chain; its full sequence is Putative S-adenosyl-L-methionine-dependent methyltransferase MT0851 (301 aa).

S-adenosyl-L-methionine-binding positions include D127 and 156–157 (DL).

The protein belongs to the UPF0677 family.

Exhibits S-adenosyl-L-methionine-dependent methyltransferase activity. This Mycobacterium tuberculosis (strain CDC 1551 / Oshkosh) protein is Putative S-adenosyl-L-methionine-dependent methyltransferase MT0851.